Consider the following 229-residue polypeptide: Transmembrane emp24 domain-containing protein 5 (229 aa).

The N-terminal stretch at 1-27 is a signal peptide; that stretch reads MGDKIWLPFPVLLLAALPPVLLPGAAG. Over 28-196 the chain is Lumenal; sequence FTPSLDSDFT…IQESNFDRVN (169 aa). Residues 45 to 126 enclose the GOLD domain; that stretch reads RECFYQPMPL…EKVIFFELIL (82 aa). A helical transmembrane segment spans residues 197–217; it reads FWSMVNLVVMVVVSAIQVYML. Residues 218-229 lie on the Cytoplasmic side of the membrane; sequence KSLFEDKRKSRT.

This sequence belongs to the EMP24/GP25L family. In terms of assembly, interacts with TMED9 and TMED10.

The protein resides in the endoplasmic reticulum membrane. It localises to the golgi apparatus. It is found in the cis-Golgi network membrane. Its subcellular location is the endoplasmic reticulum-Golgi intermediate compartment membrane. Functionally, potential role in vesicular protein trafficking, mainly in the early secretory pathway. Required for the maintenance of the Golgi apparatus; involved in protein exchange between Golgi stacks during assembly. Probably not required for COPI-vesicle-mediated retrograde transport. This chain is Transmembrane emp24 domain-containing protein 5 (TMED5), found in Pongo abelii (Sumatran orangutan).